Consider the following 1216-residue polypeptide: Probable cation-transporting ATPase 13A5 (1216 aa).

Helical transmembrane passes span 33 to 53 (RALC…MFYW), 198 to 218 (LLVK…LTLW), 222 to 242 (GYIE…VLSV), 401 to 421 (FMVF…GVYM), and 433 to 453 (MALI…LTIG). Asp486 acts as the 4-aspartylphosphate intermediate in catalysis. N-linked (GlcNAc...) asparagine glycosylation is found at Asn650 and Asn817. Mg(2+) is bound by residues Asp848 and Asp852. The next 6 helical transmembrane spans lie at 896-916 (ALVS…IQFI), 933-950 (YLLQ…TMSI), 971-991 (LLLS…CTFL), 1040-1060 (FEGT…AFIF), 1075-1095 (LFSL…FCDF), and 1113-1133 (VSIL…EDAV).

It belongs to the cation transport ATPase (P-type) (TC 3.A.3) family. Type V subfamily. As to expression, specifically expressed in brain and stomach.

It is found in the membrane. The catalysed reaction is ATP + H2O = ADP + phosphate + H(+). This Mus musculus (Mouse) protein is Probable cation-transporting ATPase 13A5 (Atp13a5).